Reading from the N-terminus, the 122-residue chain is Large ribosomal subunit protein uL18 (122 aa).

Belongs to the universal ribosomal protein uL18 family. Part of the 50S ribosomal subunit; part of the 5S rRNA/L5/L18/L25 subcomplex. Contacts the 5S and 23S rRNAs.

In terms of biological role, this is one of the proteins that bind and probably mediate the attachment of the 5S RNA into the large ribosomal subunit, where it forms part of the central protuberance. This chain is Large ribosomal subunit protein uL18, found in Dictyoglomus thermophilum (strain ATCC 35947 / DSM 3960 / H-6-12).